Here is a 63-residue protein sequence, read N- to C-terminus: Cecropin-A2 (63 aa).

Positions 1–23 (MNFYNIFVFVALILAITIGQSEA) are cleaved as a signal peptide. Arginine amide is present on R62.

This sequence belongs to the cecropin family. Strongly expressed in larval, pupal and adult fat body and hemocytes after injection of bacteria. Maximal expression in the adult involves fat body cells of the head, thorax and abdomen.

It localises to the secreted. In terms of biological role, cecropins have lytic and antibacterial activity against several Gram-positive and Gram-negative bacteria. The chain is Cecropin-A2 from Drosophila melanogaster (Fruit fly).